Here is a 278-residue protein sequence, read N- to C-terminus: Putative peptidase Cgl1093 (278 aa).

The signal sequence occupies residues 1–32 (MSSASFTTKALSVLAALTAASAPLVAASPAHA). A Peptidase S1 domain is found at 33–236 (LANARNVTGS…HAEWIAYYTG (204 aa)). The cysteines at positions 59 and 75 are disulfide-linked. Catalysis depends on charge relay system residues histidine 74, aspartate 123, and serine 189.

It belongs to the peptidase S1 family.

It is found in the secreted. This is Putative peptidase Cgl1093 from Corynebacterium glutamicum (strain ATCC 13032 / DSM 20300 / JCM 1318 / BCRC 11384 / CCUG 27702 / LMG 3730 / NBRC 12168 / NCIMB 10025 / NRRL B-2784 / 534).